A 250-amino-acid polypeptide reads, in one-letter code: 1-(5-phosphoribosyl)-5-[(5-phosphoribosylamino)methylideneamino] imidazole-4-carboxamide isomerase (250 aa).

Residue aspartate 8 is the Proton acceptor of the active site. The Proton donor role is filled by aspartate 131.

Belongs to the HisA/HisF family.

The protein resides in the cytoplasm. It catalyses the reaction 1-(5-phospho-beta-D-ribosyl)-5-[(5-phospho-beta-D-ribosylamino)methylideneamino]imidazole-4-carboxamide = 5-[(5-phospho-1-deoxy-D-ribulos-1-ylimino)methylamino]-1-(5-phospho-beta-D-ribosyl)imidazole-4-carboxamide. It functions in the pathway amino-acid biosynthesis; L-histidine biosynthesis; L-histidine from 5-phospho-alpha-D-ribose 1-diphosphate: step 4/9. This Paraburkholderia phytofirmans (strain DSM 17436 / LMG 22146 / PsJN) (Burkholderia phytofirmans) protein is 1-(5-phosphoribosyl)-5-[(5-phosphoribosylamino)methylideneamino] imidazole-4-carboxamide isomerase.